The primary structure comprises 95 residues: Large ribosomal subunit protein bL25 (95 aa).

It belongs to the bacterial ribosomal protein bL25 family. In terms of assembly, part of the 50S ribosomal subunit; part of the 5S rRNA/L5/L18/L25 subcomplex. Contacts the 5S rRNA. Binds to the 5S rRNA independently of L5 and L18.

Its function is as follows. This is one of the proteins that binds to the 5S RNA in the ribosome where it forms part of the central protuberance. This chain is Large ribosomal subunit protein bL25, found in Shewanella piezotolerans (strain WP3 / JCM 13877).